The following is a 312-amino-acid chain: MTPPASAPRVITVVGPTAAGKSDLGVFLAQRLGGEVINADSMQLYRGMDIGTAKLTLPEREGVPHRLLDIWDVTETASVAEYQRLARREIDRLLAEGRTPILVGGSGLYVKGAIDALEFPGTDPEVRARLEAELAERGSGVLHERLAAADPDAARSILASNGRRIVRALEVIEITGKPFTANLPGDEPVYDAVQIGVDVERPELDERIARRVDRMWDAGLVDEVRALEAAGLREGLTASRALGYQQILAVLAGECTEDDARAETVRATKRFARRQDSWFRRDARVVWLGGGHRDRGELPHRALTLVERAVTA.

An ATP-binding site is contributed by 15–22 (GPTAAGKS). 17–22 (TAAGKS) contributes to the substrate binding site. Residues 40-43 (DSMQ) form an interaction with substrate tRNA region.

It belongs to the IPP transferase family. As to quaternary structure, monomer. Requires Mg(2+) as cofactor.

The catalysed reaction is adenosine(37) in tRNA + dimethylallyl diphosphate = N(6)-dimethylallyladenosine(37) in tRNA + diphosphate. In terms of biological role, catalyzes the transfer of a dimethylallyl group onto the adenine at position 37 in tRNAs that read codons beginning with uridine, leading to the formation of N6-(dimethylallyl)adenosine (i(6)A). The polypeptide is tRNA dimethylallyltransferase (Streptomyces griseus subsp. griseus (strain JCM 4626 / CBS 651.72 / NBRC 13350 / KCC S-0626 / ISP 5235)).